The sequence spans 378 residues: Poly(3-hydroxyalkanoate) polymerase subunit PhaC (378 aa).

Residues 84–356 (PVLIVYALVN…QSFPVGHIGM (273 aa)) enclose the AB hydrolase-1 domain.

The protein belongs to the PHA/PHB synthase family. Type III PhaC subfamily. Forms a heterodimer with PhaE, which may multimerize in the presence of 3-hydroxybutyryl-CoA. Both subunits are required for PHB synthesis in E.coli and in PHA-negative A.eutrophus.

The protein localises to the cytoplasm. It catalyses the reaction (3R)-3-hydroxybutanoyl-CoA + [(3R)-hydroxybutanoate](n) = [(3R)-hydroxybutanoate](n+1) + CoA. It participates in biopolymer metabolism; poly-(R)-3-hydroxybutanoate biosynthesis. Its function is as follows. When expressed in E.coli with Synechocystis PhaE and C.necator PhaA and PhaB, confers the ability to synthesize up to 13% (w/w) poly(3-hydroxybutyrate) (PHB) depending on the carbon source; all 4 genes are necessary for PHB production. Cell-free in vitro coexpression with PhaE gives a heterodimer able to polymerize 3-hydroxybutyrate-CoA. The chain is Poly(3-hydroxyalkanoate) polymerase subunit PhaC from Synechocystis sp. (strain ATCC 27184 / PCC 6803 / Kazusa).